The sequence spans 200 residues: Potassium-transporting ATPase KdpC subunit (200 aa).

The chain crosses the membrane as a helical span at residues 6–26; sequence PALVLLILLTLITGIAYPLLT.

This sequence belongs to the KdpC family. The system is composed of three essential subunits: KdpA, KdpB and KdpC.

The protein resides in the cell inner membrane. In terms of biological role, part of the high-affinity ATP-driven potassium transport (or Kdp) system, which catalyzes the hydrolysis of ATP coupled with the electrogenic transport of potassium into the cytoplasm. This subunit acts as a catalytic chaperone that increases the ATP-binding affinity of the ATP-hydrolyzing subunit KdpB by the formation of a transient KdpB/KdpC/ATP ternary complex. The protein is Potassium-transporting ATPase KdpC subunit of Yersinia pseudotuberculosis serotype O:1b (strain IP 31758).